A 1051-amino-acid polypeptide reads, in one-letter code: Ubiquitin carboxyl-terminal hydrolase 28 (1051 aa).

A disordered region spans residues 60-82 (DQRVKEPSHDTTAAEPSEVEESA). The residue at position 67 (S67) is a Phosphoserine. Residues 97-116 (DNKDDLQAAIALSLLESPNI) form the UIM domain. A Glycyl lysine isopeptide (Lys-Gly) (interchain with G-Cter in SUMO2) cross-link involves residue K99. Positions 121-135 (RDLNRAHEANSAETK) are enriched in basic and acidic residues. The disordered stretch occupies residues 121–140 (RDLNRAHEANSAETKRSKRK). A USP domain is found at 162-655 (VGLKNVGNTC…SAYCLMYIND (494 aa)). The Nucleophile role is filled by C171. Residue S376 is modified to Phosphoserine. Residues 483–538 (DLTPKESSSPESCSQNAGSTFSSPEDALPSSEGMNGPFTSPHSSLETPAPPAPRTV) form a disordered region. 2 stretches are compositionally biased toward polar residues: residues 487-505 (KESSSPESCSQNAGSTFSS) and 519-528 (PFTSPHSSLE). S555 carries the post-translational modification Phosphoserine. H605 serves as the catalytic Proton acceptor. A disordered region spans residues 703–735 (EEQSCKIPQMESSPNSSSQDFSTSQESPAVSSH). The segment covering 713–730 (ESSPNSSSQDFSTSQESP) has biased composition (low complexity). Position 720 is a phosphoserine (S720). A Phosphothreonine modification is found at T1022.

Belongs to the peptidase C19 family. USP28 subfamily. Interacts with ZNF304. Interacts with PRKD1. Interacts with TP53BP1. Interacts with FBXW7; following DNA damage, dissociates from FBXW7 leading to degradation of MYC. In terms of processing, degraded upon nickel ion level or hypoxia exposure. Phosphorylated upon DNA damage at Ser-67 and Ser-720, by ATM or ATR. Phosphorylated by PRKD1.

It is found in the nucleus. Its subcellular location is the nucleoplasm. It catalyses the reaction Thiol-dependent hydrolysis of ester, thioester, amide, peptide and isopeptide bonds formed by the C-terminal Gly of ubiquitin (a 76-residue protein attached to proteins as an intracellular targeting signal).. In terms of biological role, deubiquitinase involved in DNA damage response checkpoint and MYC proto-oncogene stability. Involved in DNA damage induced apoptosis by specifically deubiquitinating proteins of the DNA damage pathway such as CLSPN. Also involved in G2 DNA damage checkpoint, by deubiquitinating CLSPN, and preventing its degradation by the anaphase promoting complex/cyclosome (APC/C). In contrast, it does not deubiquitinate PLK1. Specifically deubiquitinates MYC in the nucleoplasm, leading to prevent MYC degradation by the proteasome: acts by specifically interacting with FBXW7 (FBW7alpha) in the nucleoplasm and counteracting ubiquitination of MYC by the SCF(FBXW7) complex. Deubiquitinates ZNF304, hence preventing ZNF304 degradation by the proteasome and leading to the activated KRAS-mediated promoter hypermethylation and transcriptional silencing of tumor suppressor genes (TSGs) in a subset of colorectal cancers (CRC) cells. The chain is Ubiquitin carboxyl-terminal hydrolase 28 (Usp28) from Mus musculus (Mouse).